The chain runs to 469 residues: 3-isopropylmalate dehydratase large subunit (469 aa).

[4Fe-4S] cluster contacts are provided by cysteine 347, cysteine 410, and cysteine 413.

This sequence belongs to the aconitase/IPM isomerase family. LeuC type 1 subfamily. As to quaternary structure, heterodimer of LeuC and LeuD. It depends on [4Fe-4S] cluster as a cofactor.

The catalysed reaction is (2R,3S)-3-isopropylmalate = (2S)-2-isopropylmalate. It functions in the pathway amino-acid biosynthesis; L-leucine biosynthesis; L-leucine from 3-methyl-2-oxobutanoate: step 2/4. Functionally, catalyzes the isomerization between 2-isopropylmalate and 3-isopropylmalate, via the formation of 2-isopropylmaleate. The chain is 3-isopropylmalate dehydratase large subunit from Burkholderia pseudomallei (strain 1106a).